Reading from the N-terminus, the 135-residue chain is Small ribosomal subunit protein uS11 (135 aa).

Positions 1-20 (MGRQRQQRSRGSRSRRRVRK) are disordered.

It belongs to the universal ribosomal protein uS11 family. In terms of assembly, part of the 30S ribosomal subunit. Interacts with proteins S7 and S18. Binds to IF-3.

In terms of biological role, located on the platform of the 30S subunit, it bridges several disparate RNA helices of the 16S rRNA. Forms part of the Shine-Dalgarno cleft in the 70S ribosome. This Rubrobacter xylanophilus (strain DSM 9941 / JCM 11954 / NBRC 16129 / PRD-1) protein is Small ribosomal subunit protein uS11.